The primary structure comprises 228 residues: Lipoprotein-releasing system ATP-binding protein LolD 2 (228 aa).

The ABC transporter domain occupies 9 to 228 (RGLERVYKTE…KDGHLELQRV (220 aa)). 42–49 (GPSGSGKS) contacts ATP.

It belongs to the ABC transporter superfamily. Lipoprotein translocase (TC 3.A.1.125) family. As to quaternary structure, the complex is composed of two ATP-binding proteins (LolD) and two transmembrane proteins (LolC and LolE).

It is found in the cell inner membrane. In terms of biological role, part of the ABC transporter complex LolCDE involved in the translocation of mature outer membrane-directed lipoproteins, from the inner membrane to the periplasmic chaperone, LolA. Responsible for the formation of the LolA-lipoprotein complex in an ATP-dependent manner. The polypeptide is Lipoprotein-releasing system ATP-binding protein LolD 2 (Caulobacter vibrioides (strain ATCC 19089 / CIP 103742 / CB 15) (Caulobacter crescentus)).